Here is a 468-residue protein sequence, read N- to C-terminus: Lysosomal dipeptide transporter MFSD1 (468 aa).

Positions 1–25 are disordered; that stretch reads MEDEEEEARALLPGGSDEAGRETRA. The Dileucine internalization motif signature appears at 11-12; that stretch reads LL. 12 helical membrane-spanning segments follow: residues 42–62, 86–106, 116–136, 138–158, 173–194, 218–238, 270–290, 307–327, 334–354, 364–384, 395–415, and 421–441; these read LAHR…SYFC, LLYA…GFLI, TIIF…GGIF, AFWL…SLAV, LNLV…NMNL, LMIG…LAYL, WLIF…IGLV, AINS…GLLV, IIWV…LAFT, LLGL…AFVV, FMQS…GMIL, and LFLE…VVLL.

This sequence belongs to the major facilitator superfamily. Homodimer. Interacts with lysosomal protein GLMP (via lumenal domain); the interaction starts while both proteins are still in the endoplasmic reticulum and is required for stabilization of MFSD1 in lysosomes but has no direct effect on its targeting to lysosomes or transporter activity.

Its subcellular location is the lysosome membrane. The enzyme catalyses L-alpha-aminoacyl-L-arginine(out) = L-alpha-aminoacyl-L-arginine(in). It carries out the reaction L-arginyl-L-alpha-amino acid(out) = L-arginyl-L-alpha-amino acid(in). It catalyses the reaction L-arginyl-glycine(out) = L-arginyl-glycine(in). The catalysed reaction is L-alpha-aminoacyl-L-lysine(out) = L-alpha-aminoacyl-L-lysine(in). The enzyme catalyses L-aspartyl-L-lysine(out) = L-aspartyl-L-lysine(in). It carries out the reaction L-alanyl-L-lysine(out) = L-alanyl-L-lysine(in). It catalyses the reaction L-lysyl-L-alpha-amino acid(out) = L-lysyl-L-alpha-amino acid(in). The catalysed reaction is L-lysyl-L-alanine(out) = L-lysyl-L-alanine(in). The enzyme catalyses L-lysyl-L-lysine(out) = L-lysyl-L-lysine(in). It carries out the reaction L-lysyl-glycine(out) = L-lysyl-glycine(in). It catalyses the reaction L-alpha-aminoacyl-L-histidine(out) = L-alpha-aminoacyl-L-histidine(in). The catalysed reaction is L-histidyl-L-alpha-amino acid(out) = L-histidyl-L-alpha-amino acid(in). The enzyme catalyses L-histidyl-glycine(out) = L-histidyl-glycine(in). Lysosomal dipeptide uniporter that selectively exports lysine, arginine or histidine-containing dipeptides with a net positive charge from the lysosome lumen into the cytosol. Could play a role in a specific type of protein O-glycosylation indirectly regulating macrophages migration and tissue invasion. Also essential for liver homeostasis. This is Lysosomal dipeptide transporter MFSD1 from Bos taurus (Bovine).